The primary structure comprises 352 residues: Long-chain-alcohol O-fatty-acyltransferase (352 aa).

8 helical membrane passes run 13-33, 34-54, 67-87, 128-148, 155-175, 239-259, 267-287, and 303-323; these read VWISAIAAACYCRFVPAVAPH, GGALRLLLLLPVVLLFIFLPL, LYLVWLANFKLLLFAFHLGPL, KVVLFVAKLVFFAGILKIYEF, FVISVLYCFHFYLGTEITLAA, VAGAMLVAFTVSGLMHEVFFF, SWEVTGFFVLHGVCTAVEMVV, and GALTVGFVMVTGGWLFLPQLV.

It belongs to the wax synthase family.

It localises to the microsome membrane. It catalyses the reaction a long chain fatty alcohol + a fatty acyl-CoA = a wax ester + CoA. In terms of biological role, catalyzes the final step in the synthesis of long-chain linear esters (waxes). Has activity with both saturated and monounsaturated acyl-CoA ranging from 14 to 24 carbons in length, but C20:1 acyl-CoA is the preferred substrate. The sequence is that of Long-chain-alcohol O-fatty-acyltransferase from Simmondsia chinensis (Jojoba).